We begin with the raw amino-acid sequence, 337 residues long: Peroxidase 14 (337 aa).

A signal peptide spans 1 to 22; it reads MARIGSFLILLSLTYALTLCIC. A glycan (N-linked (GlcNAc...) asparagine) is linked at Asn-24. Disulfide bonds link Cys-44-Cys-124, Cys-77-Cys-82, Cys-130-Cys-331, and Cys-209-Cys-241. The Proton acceptor role is filled by His-75. The Ca(2+) site is built by Asp-76, Val-79, Gly-81, Asp-83, and Ser-85. Pro-172 serves as a coordination point for substrate. Asn-191 carries an N-linked (GlcNAc...) asparagine glycan. His-202 contributes to the heme b binding site. A Ca(2+)-binding site is contributed by Thr-203. Asn-218 and Asn-249 each carry an N-linked (GlcNAc...) asparagine glycan. Positions 254, 257, and 262 each coordinate Ca(2+).

The protein belongs to the peroxidase family. Classical plant (class III) peroxidase subfamily. It depends on heme b as a cofactor. The cofactor is Ca(2+).

The protein resides in the secreted. It catalyses the reaction 2 a phenolic donor + H2O2 = 2 a phenolic radical donor + 2 H2O. Its function is as follows. Removal of H(2)O(2), oxidation of toxic reductants, biosynthesis and degradation of lignin, suberization, auxin catabolism, response to environmental stresses such as wounding, pathogen attack and oxidative stress. These functions might be dependent on each isozyme/isoform in each plant tissue. The protein is Peroxidase 14 (PER14) of Arabidopsis thaliana (Mouse-ear cress).